The primary structure comprises 347 residues: Probable replication factor C subunit 5 (347 aa).

64–71 (GPPGTGKT) provides a ligand contact to ATP.

Belongs to the activator 1 small subunits family. As to quaternary structure, heteropentamer of various rfc subunits that forms a complex (RFC) with PCNA in the presence of ATP.

It localises to the nucleus. Functionally, the elongation of primed DNA templates by DNA polymerase delta and epsilon requires the action of the accessory proteins PCNA and activator 1. The sequence is that of Probable replication factor C subunit 5 (rfc5) from Dictyostelium discoideum (Social amoeba).